The following is a 183-amino-acid chain: Ribosome rescue factor SmrB (183 aa).

The Smr domain maps to 98 to 173 (LDLHGLTQLQ…GDAALLVLIE (76 aa)).

The protein belongs to the SmrB family. In terms of assembly, associates with collided ribosomes, but not with correctly translating polysomes.

In terms of biological role, acts as a ribosome collision sensor. Detects stalled/collided disomes (pairs of ribosomes where the leading ribosome is stalled and a second ribosome has collided with it) and endonucleolytically cleaves mRNA at the 5' boundary of the stalled ribosome. Stalled/collided disomes form a new interface (primarily via the 30S subunits) that binds SmrB. Cleaved mRNA becomes available for tmRNA ligation, leading to ribosomal subunit dissociation and rescue of stalled ribosomes. The sequence is that of Ribosome rescue factor SmrB from Escherichia coli O17:K52:H18 (strain UMN026 / ExPEC).